Reading from the N-terminus, the 251-residue chain is Flap endonuclease Xni (251 aa).

Asp-104 provides a ligand contact to Mg(2+). The 5'-3' exonuclease domain occupies 160–249; that stretch reads VQPQQLPDYW…IDGNLQQLRL (90 aa). Positions 171, 172, 180, 182, and 185 each coordinate K(+). An interaction with DNA region spans residues 184 to 189; sequence GIGPKS.

This sequence belongs to the Xni family. Mg(2+) is required as a cofactor. Requires K(+) as cofactor.

Has flap endonuclease activity. During DNA replication, flap endonucleases cleave the 5'-overhanging flap structure that is generated by displacement synthesis when DNA polymerase encounters the 5'-end of a downstream Okazaki fragment. The sequence is that of Flap endonuclease Xni from Escherichia coli O6:K15:H31 (strain 536 / UPEC).